We begin with the raw amino-acid sequence, 1173 residues long: Thrombospondin-1 (1173 aa).

Positions 1–18 (MKGIFLLLMLVMPQTHQA) are cleaved as a signal peptide. The Laminin G-like domain occupies 22–224 (GNDDNSVFDL…LQNVRFVFGT (203 aa)). Residues 50–98 (HLVKGPDPSSPAYRIEDADLIPPLPEDKFQDLLDAIRADRGFILLATLR) form a heparin-binding region. Asn155 and Asn158 each carry an N-linked (GlcNAc...) asparagine glycan. Cys174 and Cys235 are disulfide-bonded. Residues Asn250 and Asn363 are each glycosylated (N-linked (GlcNAc...) asparagine). In terms of domain architecture, VWFC spans 319 to 376 (GVCLHNGVLHKNRDEWTVDSCTECTCQNSATICRKVSCPLMPCTNATIPDGECCPRCW). 3 consecutive TSP type-1 domains span residues 382-432 (DDDW…QDCD), 438-493 (DGGW…DPCP), and 495-550 (NGQW…QDCP). Cystine bridges form between Cys394/Cys426, Cys398/Cys431, Cys409/Cys416, Cys450/Cys487, Cys454/Cys492, Cys465/Cys477, Cys507/Cys544, Cys511/Cys549, Cys522/Cys534, Cys554/Cys565, Cys559/Cys575, Cys578/Cys589, Cys595/Cys611, Cys602/Cys620, Cys623/Cys647, Cys653/Cys666, Cys660/Cys679, and Cys681/Cys692. An EGF-like 1 domain is found at 550 to 590 (PIDGCLSNPCFAGVKCTSFIDGSWKCGSCPPGYRGNGITCK). In terms of domain architecture, EGF-like 2 spans 649–693 (PRNPCADGTHDCHKNARCIYLGHYSDPMFRCECRPGYAGNGIICG). TSP type-3 repeat units lie at residues 694–729 (EDTDLDGWPNENLTCVDNATYHCLKDNCPNLPNSGQ), 730–765 (EDYDKDGMGDACDKDDDNDGILDDRDNCQFVYNPAQ), 766–788 (YDYDRDDVGDRCDNCPYNHNPDQ), 789–824 (ADTDRNGEGDACSVDIDGDGILNERDNCAYVYNVDQ), 825–847 (KDTDKDGVGDQCDNCPLEHNPEQ), 848–885 (TDSDSDLIGDKCDNNQDIDEDGHQNNLDNCPYIPNANQ), 886–921 (ADHDKDGKGDACDHDDDNDGVPDDKDNCRLVPNPDQ), and 922–957 (TDTNGDGRGDACQYDFDDDSIPDAEDVCPENVEIST). 2 N-linked (GlcNAc...) asparagine glycosylation sites follow: Asn705 and Asn711. 9 disulfides stabilise this stretch: Cys708/Cys716, Cys721/Cys741, Cys757/Cys777, Cys780/Cys800, Cys816/Cys836, Cys839/Cys859, Cys877/Cys897, Cys913/Cys933, and Cys949/Cys1170. Residues 838-935 (NCPLEHNPEQ…GDGRGDACQY (98 aa)) are disordered. Over residues 886-897 (ADHDKDGKGDAC) the composition is skewed to basic and acidic residues. The Cell attachment site motif lies at 929–931 (RGD). The 213-residue stretch at 961–1173 (RKFQMVPLDP…SDLKYECRDS (213 aa)) folds into the TSP C-terminal domain. Asn1070 carries N-linked (GlcNAc...) asparagine glycosylation.

It belongs to the thrombospondin family. As to quaternary structure, homotrimer; disulfide-linked.

It is found in the secreted. It localises to the cell surface. The protein localises to the extracellular space. The protein resides in the extracellular matrix. Its subcellular location is the endoplasmic reticulum. It is found in the sarcoplasmic reticulum. In terms of biological role, adhesive glycoprotein that mediates cell-to-cell and cell-to-matrix interactions. Can bind to fibrinogen, fibronectin, laminin, type V collagen and integrins alpha-V/beta-1, alpha-V/beta-3 and alpha-IIb/beta-3. May play a role in ER stress response. In Xenopus laevis (African clawed frog), this protein is Thrombospondin-1 (thbs1).